A 553-amino-acid polypeptide reads, in one-letter code: CTP synthase (553 aa).

Residues 1–270 (MTKYVFVTGG…DRLICEELRL (270 aa)) form an amidoligase domain region. Position 13 (serine 13) interacts with CTP. Residue serine 13 coordinates UTP. Residues 14–19 (SLGKGI) and aspartate 71 contribute to the ATP site. Mg(2+) is bound by residues aspartate 71 and glutamate 144. Residues 151–153 (DIE), 191–196 (KTKPTQ), and lysine 227 contribute to the CTP site. UTP-binding positions include 191–196 (KTKPTQ) and lysine 227. The Glutamine amidotransferase type-1 domain occupies 295–547 (TIGMVGKYVD…VQAALACQQT (253 aa)). L-glutamine is bound at residue glycine 356. Cysteine 383 acts as the Nucleophile; for glutamine hydrolysis in catalysis. Residues 384–387 (LGMQ), glutamate 407, and arginine 473 each bind L-glutamine. Active-site residues include histidine 520 and glutamate 522.

Belongs to the CTP synthase family. Homotetramer.

The enzyme catalyses UTP + L-glutamine + ATP + H2O = CTP + L-glutamate + ADP + phosphate + 2 H(+). The catalysed reaction is L-glutamine + H2O = L-glutamate + NH4(+). It carries out the reaction UTP + NH4(+) + ATP = CTP + ADP + phosphate + 2 H(+). The protein operates within pyrimidine metabolism; CTP biosynthesis via de novo pathway; CTP from UDP: step 2/2. Its activity is regulated as follows. Allosterically activated by GTP, when glutamine is the substrate; GTP has no effect on the reaction when ammonia is the substrate. The allosteric effector GTP functions by stabilizing the protein conformation that binds the tetrahedral intermediate(s) formed during glutamine hydrolysis. Inhibited by the product CTP, via allosteric rather than competitive inhibition. In terms of biological role, catalyzes the ATP-dependent amination of UTP to CTP with either L-glutamine or ammonia as the source of nitrogen. Regulates intracellular CTP levels through interactions with the four ribonucleotide triphosphates. This is CTP synthase from Burkholderia mallei (strain NCTC 10247).